A 416-amino-acid polypeptide reads, in one-letter code: Phosphoglycerate kinase (416 aa).

Ser-2 is subject to N-acetylserine. (2R)-3-phosphoglycerate contacts are provided by Val-23, Asp-24, Phe-25, Asn-26, Gln-38, Arg-39, Ser-62, His-63, Gly-65, and Arg-66. Residue Lys-82 forms a Glycyl lysine isopeptide (Lys-Gly) (interchain with G-Cter in ubiquitin) linkage. The residue at position 93 (Thr-93) is a Phosphothreonine. Position 110 is a phosphoserine (Ser-110). Positions 121 and 122 each coordinate (2R)-3-phosphoglycerate. Phosphoserine is present on residues Ser-130 and Ser-154. Positions 168 and 169 each coordinate (2R)-3-phosphoglycerate. Phosphoserine is present on Ser-172. Lys-197 is covalently cross-linked (Glycyl lysine isopeptide (Lys-Gly) (interchain with G-Cter in ubiquitin)). Thr-203 is modified (phosphothreonine). An ADP-binding site is contributed by Gly-212. Gly-212 lines the CDP pocket. Positions 213 and 214 each coordinate AMP. Residues Ala-213 and Lys-214 each coordinate ATP. Ala-213 provides a ligand contact to Mg(2+). Residues Ala-216 and Asp-217 each contribute to the Mg(2+) site. Asp-217 contacts CDP. An AMP-binding site is contributed by Lys-218. Lys-218 is a binding site for ATP. An ADP-binding site is contributed by Gly-236. A CDP-binding site is contributed by Gly-236. Residue Gly-237 coordinates AMP. Gly-237 is a binding site for ATP. At Thr-241 the chain carries Phosphothreonine. Residues Lys-258 and Lys-274 each participate in a glycyl lysine isopeptide (Lys-Gly) (interchain with G-Cter in ubiquitin) cross-link. Thr-298 bears the Phosphothreonine mark. Lys-302 is covalently cross-linked (Glycyl lysine isopeptide (Lys-Gly) (interchain with G-Cter in ubiquitin)). Residue Gly-311 coordinates AMP. Residues Gly-311 and Leu-312 each coordinate ATP. Ser-318 carries the post-translational modification Phosphoserine. Thr-331 bears the Phosphothreonine mark. Asn-335 contacts ATP. The CDP site is built by Gly-336 and Phe-341. Phe-341 lines the ADP pocket. Residue Glu-342 coordinates AMP. Glu-342 contributes to the ATP binding site. Gly-371 lines the (2R)-3-phosphoglycerate pocket. ATP-binding residues include Asp-373 and Thr-374. A Mg(2+)-binding site is contributed by Asp-373. Thr-392 is subject to Phosphothreonine. (2R)-3-phosphoglycerate is bound by residues Gly-394 and Gly-395.

It belongs to the phosphoglycerate kinase family. As to quaternary structure, monomer. Mg(2+) is required as a cofactor.

The protein resides in the cytoplasm. Its subcellular location is the mitochondrion. The catalysed reaction is (2R)-3-phosphoglycerate + ATP = (2R)-3-phospho-glyceroyl phosphate + ADP. Its pathway is carbohydrate degradation; glycolysis; pyruvate from D-glyceraldehyde 3-phosphate: step 2/5. Catalyzes one of the two ATP producing reactions in the glycolytic pathway via the reversible conversion of 1,3-diphosphoglycerate to 3-phosphoglycerate. Both L- and D- forms of purine and pyrimidine nucleotides can be used as substrates, but the activity is much lower on pyrimidines. Negatively regulates the biosynthesis of acetyl-CoA from pyruvate in the mitochondrion. The polypeptide is Phosphoglycerate kinase (PGK1) (Saccharomyces cerevisiae (strain ATCC 204508 / S288c) (Baker's yeast)).